We begin with the raw amino-acid sequence, 236 residues long: Probable fimbrial chaperone EcpE (236 aa).

Residues methionine 1–alanine 27 form the signal peptide.

This sequence belongs to the EcpB/EcpE family.

Part of the ecpRABCDE operon, which encodes the E.coli common pilus (ECP). ECP is found in both commensal and pathogenic strains and plays a dual role in early-stage biofilm development and host cell recognition. The sequence is that of Probable fimbrial chaperone EcpE (ecpE) from Escherichia coli O18:K1:H7 (strain IHE3034 / ExPEC).